We begin with the raw amino-acid sequence, 238 residues long: MTPHINAPAGAFADVVLMPGDPLRAKYIAETFLQDVKEITNVRNMLGFTGTYKGRKISVMGHGMGIPSCSIYTKELITEYGVKKIIRVGSCGAVRMDVKLRDVVIGFGACTDSKVNRIRFKNHDFAAIADFDMTMAAVQAAKAKGLNVHVGNLFSADLFYTPDVEMFDVMEKYGILGVEMEAAGIYGVAAEFGAKALTICTVSDHIRTHEQTTPEERQLTFNDMIEIALESVLIGDNA.

Residue histidine 4 participates in a purine D-ribonucleoside binding. Phosphate-binding positions include glycine 20, arginine 24, arginine 43, and arginine 87–serine 90. A purine D-ribonucleoside contacts are provided by residues glutamate 179–glutamate 181 and serine 203–aspartate 204. Aspartate 204 (proton donor) is an active-site residue.

The protein belongs to the PNP/UDP phosphorylase family. As to quaternary structure, homohexamer; trimer of homodimers.

It catalyses the reaction a purine D-ribonucleoside + phosphate = a purine nucleobase + alpha-D-ribose 1-phosphate. The catalysed reaction is a purine 2'-deoxy-D-ribonucleoside + phosphate = a purine nucleobase + 2-deoxy-alpha-D-ribose 1-phosphate. Its function is as follows. Catalyzes the reversible phosphorolytic breakdown of the N-glycosidic bond in the beta-(deoxy)ribonucleoside molecules, with the formation of the corresponding free purine bases and pentose-1-phosphate. The sequence is that of Purine nucleoside phosphorylase DeoD-type from Pasteurella multocida (strain Pm70).